Here is a 225-residue protein sequence, read N- to C-terminus: Phosphoserine phosphatase (225 aa).

Met1 is modified (N-acetylmethionine). Asp20 functions as the Nucleophile in the catalytic mechanism. Mg(2+)-binding residues include Asp20 and Asp22. An L-serine-binding site is contributed by Asp20 to Asp22. Asp22 functions as the Proton donor in the catalytic mechanism. Residue Met52 participates in O-phospho-L-serine binding. Gly53 contacts phosphate. L-serine is bound by residues Ser109–Gly111 and Lys158. O-phospho-L-serine contacts are provided by residues Ser109–Gly111 and Lys158. Asp179 provides a ligand contact to Mg(2+). O-phospho-L-serine is bound at residue Thr182. Phosphate is bound at residue Thr182.

This sequence belongs to the HAD-like hydrolase superfamily. SerB family. Homodimer. Mg(2+) serves as cofactor.

The protein localises to the cytoplasm. It localises to the cytosol. It catalyses the reaction O-phospho-L-serine + H2O = L-serine + phosphate. The enzyme catalyses O-phospho-D-serine + H2O = D-serine + phosphate. The protein operates within amino-acid biosynthesis; L-serine biosynthesis; L-serine from 3-phospho-D-glycerate: step 3/3. Inhibited by calcium ions. Functionally, catalyzes the last irreversible step in the biosynthesis of L-serine from carbohydrates, the dephosphorylation of O-phospho-L-serine to L-serine. L-serine can then be used in protein synthesis, to produce other amino acids, in nucleotide metabolism or in glutathione synthesis, or can be racemized to D-serine, a neuromodulator. May also act on O-phospho-D-serine. This is Phosphoserine phosphatase from Homo sapiens (Human).